The sequence spans 192 residues: Thymidylate kinase (192 aa).

7–14 (GIDCVGKS) contacts ATP.

Belongs to the thymidylate kinase family.

It carries out the reaction dTMP + ATP = dTDP + ADP. Functionally, phosphorylation of dTMP to form dTDP in both de novo and salvage pathways of dTTP synthesis. The protein is Thymidylate kinase of Campylobacter jejuni subsp. jejuni serotype O:23/36 (strain 81-176).